Consider the following 199-residue polypeptide: Sulfocyanin (199 aa).

The helical; Signal-anchor for type II membrane protein transmembrane segment at 7–27 (VLPVVVGILVVIIAVAVGVYV) threads the bilayer. The 110-residue stretch at 79–188 (NFNGTSSGSL…SGMWAVLVAS (110 aa)) folds into the Plastocyanin-like domain. Positions 110, 171, 176, and 181 each coordinate Cu cation.

The protein belongs to the multicopper oxidase family.

The protein localises to the cell membrane. Its function is as follows. The 4 redox proteins SoxE, SoxF, SoxG and SoxH probably form part of a membrane respiratory complex together with SoxM, a catalytic subunit of cytochrome oxidase. The polypeptide is Sulfocyanin (soxE) (Sulfolobus acidocaldarius (strain ATCC 33909 / DSM 639 / JCM 8929 / NBRC 15157 / NCIMB 11770)).